Reading from the N-terminus, the 490-residue chain is tRNA-guanine(15) transglycosylase (490 aa).

Residue aspartate 90 is the Nucleophile of the active site. Residues aspartate 125 and alanine 193 each coordinate substrate. The Zn(2+) site is built by cysteine 276, cysteine 278, and cysteine 281.

The protein belongs to the archaeosine tRNA-ribosyltransferase family. Zn(2+) serves as cofactor.

It catalyses the reaction guanosine(15) in tRNA + 7-cyano-7-deazaguanine = 7-cyano-7-carbaguanosine(15) in tRNA + guanine. Its pathway is tRNA modification; archaeosine-tRNA biosynthesis. In terms of biological role, exchanges the guanine residue with 7-cyano-7-deazaguanine (preQ0) at position 15 in the dihydrouridine loop (D-loop) of archaeal tRNAs. The protein is tRNA-guanine(15) transglycosylase of Methanosarcina acetivorans (strain ATCC 35395 / DSM 2834 / JCM 12185 / C2A).